Reading from the N-terminus, the 89-residue chain is Large ribosomal subunit protein uL30 (89 aa).

Belongs to the universal ribosomal protein uL30 family. As to quaternary structure, part of the 50S ribosomal subunit.

The chain is Large ribosomal subunit protein uL30 from Myxococcus xanthus (strain DK1622).